A 550-amino-acid chain; its full sequence is Dihydroxy-acid dehydratase (550 aa).

Mg(2+) is bound at residue Asp-78. Cys-119 is a binding site for [2Fe-2S] cluster. Mg(2+) is bound by residues Asp-120 and Lys-121. The residue at position 121 (Lys-121) is an N6-carboxylysine. Position 191 (Cys-191) interacts with [2Fe-2S] cluster. A Mg(2+)-binding site is contributed by Glu-440. Catalysis depends on Ser-466, which acts as the Proton acceptor.

The protein belongs to the IlvD/Edd family. As to quaternary structure, homodimer. [2Fe-2S] cluster serves as cofactor. Mg(2+) is required as a cofactor.

The enzyme catalyses (2R)-2,3-dihydroxy-3-methylbutanoate = 3-methyl-2-oxobutanoate + H2O. It catalyses the reaction (2R,3R)-2,3-dihydroxy-3-methylpentanoate = (S)-3-methyl-2-oxopentanoate + H2O. Its pathway is amino-acid biosynthesis; L-isoleucine biosynthesis; L-isoleucine from 2-oxobutanoate: step 3/4. The protein operates within amino-acid biosynthesis; L-valine biosynthesis; L-valine from pyruvate: step 3/4. Functions in the biosynthesis of branched-chain amino acids. Catalyzes the dehydration of (2R,3R)-2,3-dihydroxy-3-methylpentanoate (2,3-dihydroxy-3-methylvalerate) into 2-oxo-3-methylpentanoate (2-oxo-3-methylvalerate) and of (2R)-2,3-dihydroxy-3-methylbutanoate (2,3-dihydroxyisovalerate) into 2-oxo-3-methylbutanoate (2-oxoisovalerate), the penultimate precursor to L-isoleucine and L-valine, respectively. This Methanococcus maripaludis (strain DSM 14266 / JCM 13030 / NBRC 101832 / S2 / LL) protein is Dihydroxy-acid dehydratase.